Reading from the N-terminus, the 463-residue chain is MSTGTVVQVIGAVVDVEFPQDAVPQVYDALKITGEGSCNGLVLEVQQQLGGGVVRTIAMGTSDGLRRGLEVVNSGSPISVPVGTATLGRIMNVLGDPIDEAGAIGEEERYVIHRAAPSYEEQSNTTELLETGIKVIDLVCPFAKGGKVGLFGGAGVGKTVNMMELINNIAKAHSGLSVFAGVGERTREGNDFYYEMKDSGVLDKVAMVYGQMNEPPGNRLRVALTGLTMAEKFRDEGRDVLLFVDNIYRYTLAGTEVSALLGRMPSAVGYQPTLAEEMGVLQERITSTKTGSITSVQAVYVPADDLTDPSPATTFAHLDATVVLSRQIASLGIYPAVDPLDSTSRQLDPLVVGQEHYDVANGVQTVLQRYKELKDIIAILGMDELSDDDKMTVSRARKIERFLSQPFHVAEVFTGSPGKYVSLKDTIRGFKGILSGEFDHIPEQAFYMVGSIDEAVEKANKKK.

Residue 152–159 (GGAGVGKT) coordinates ATP.

Belongs to the ATPase alpha/beta chains family. As to quaternary structure, F-type ATPases have 2 components, CF(1) - the catalytic core - and CF(0) - the membrane proton channel. CF(1) has five subunits: alpha(3), beta(3), gamma(1), delta(1), epsilon(1). CF(0) has three main subunits: a(1), b(2) and c(9-12). The alpha and beta chains form an alternating ring which encloses part of the gamma chain. CF(1) is attached to CF(0) by a central stalk formed by the gamma and epsilon chains, while a peripheral stalk is formed by the delta and b chains.

It localises to the cell inner membrane. It carries out the reaction ATP + H2O + 4 H(+)(in) = ADP + phosphate + 5 H(+)(out). Functionally, produces ATP from ADP in the presence of a proton gradient across the membrane. The catalytic sites are hosted primarily by the beta subunits. In Shewanella oneidensis (strain ATCC 700550 / JCM 31522 / CIP 106686 / LMG 19005 / NCIMB 14063 / MR-1), this protein is ATP synthase subunit beta.